We begin with the raw amino-acid sequence, 733 residues long: Folic acid synthesis protein fol1 (733 aa).

2 DHNA regions span residues 55 to 167 (VVVE…YAER) and 179 to 277 (IEFS…QIYR). Phosphotyrosine is present on tyrosine 281. The interval 295–454 (NKIAYLSFGS…LPSQGIRLYS (160 aa)) is HPK. The region spanning 465-724 (ALTMGILNVT…DTKEMSKVVG (260 aa)) is the Pterin-binding domain. A DHPS region spans residues 467–733 (TMGILNVTPD…GMANAIRYVP (267 aa)). Asparagine 472 serves as a coordination point for Mg(2+). (7,8-dihydropterin-6-yl)methyl diphosphate-binding positions include threonine 511, aspartate 546, asparagine 565, aspartate 637, lysine 677, and 712–714 (RVH).

In the N-terminal section; belongs to the DHNA family. The protein in the central section; belongs to the HPPK family. It in the C-terminal section; belongs to the DHPS family. Mg(2+) serves as cofactor.

It is found in the cytoplasm. It catalyses the reaction 7,8-dihydroneopterin = 6-hydroxymethyl-7,8-dihydropterin + glycolaldehyde. It carries out the reaction 6-hydroxymethyl-7,8-dihydropterin + ATP = (7,8-dihydropterin-6-yl)methyl diphosphate + AMP + H(+). The catalysed reaction is (7,8-dihydropterin-6-yl)methyl diphosphate + 4-aminobenzoate = 7,8-dihydropteroate + diphosphate. Its pathway is cofactor biosynthesis; tetrahydrofolate biosynthesis; 2-amino-4-hydroxy-6-hydroxymethyl-7,8-dihydropteridine diphosphate from 7,8-dihydroneopterin triphosphate: step 3/4. It functions in the pathway cofactor biosynthesis; tetrahydrofolate biosynthesis; 2-amino-4-hydroxy-6-hydroxymethyl-7,8-dihydropteridine diphosphate from 7,8-dihydroneopterin triphosphate: step 4/4. The protein operates within cofactor biosynthesis; tetrahydrofolate biosynthesis; 7,8-dihydrofolate from 2-amino-4-hydroxy-6-hydroxymethyl-7,8-dihydropteridine diphosphate and 4-aminobenzoate: step 1/2. In terms of biological role, catalyzes three sequential steps of tetrahydrofolate biosynthesis. This Schizosaccharomyces pombe (strain 972 / ATCC 24843) (Fission yeast) protein is Folic acid synthesis protein fol1 (fol1).